The chain runs to 242 residues: NADPH-dependent pterin aldehyde reductase (242 aa).

T2 bears the N-acetylthreonine mark. Residue 21–50 (LITGVSKGLGRALALELAKRGHTVIGCARS) coordinates NADP(+). S153 provides a ligand contact to substrate. Y166 functions as the Proton acceptor in the catalytic mechanism. Residue K170 participates in NADP(+) binding.

Belongs to the short-chain dehydrogenases/reductases (SDR) family. Homodimer. As to expression, mostly expressed in seeds, and, to a lower extent, in roots, leaves, flowers and siliques.

It localises to the cytoplasm. NADPH-dependent pterin aldehyde reductase involved in pterin aldehyde salvage during folate turnover. Catalyzes the reduction of diverse aromatic and aliphatic aldehydes (e.g. acetaldehyde, n-propanal, 1-naphthaldehyde, benzaldehyde, cinnamaldehyde, n-butanal, n-hexanal, n-pentanal, 2-naphthaldehyde, n-octanal, n-nonanal and n-heptanal), in addition to the conversion of pterin-6-aldehyde (PtCHO) to 6-hydroxymethylpterin (PtCH(2)OH), and the conversion of dihydropterin-6-aldehyde (H(2)PtCHO) to 6-hydroxymethyldihydropterin (H(2)PtCH(2)OH). Cannot reduce the pterin ring. In Arabidopsis thaliana (Mouse-ear cress), this protein is NADPH-dependent pterin aldehyde reductase.